We begin with the raw amino-acid sequence, 193 residues long: UPF0301 protein SAV_5129 (193 aa).

This sequence belongs to the UPF0301 (AlgH) family.

The chain is UPF0301 protein SAV_5129 from Streptomyces avermitilis (strain ATCC 31267 / DSM 46492 / JCM 5070 / NBRC 14893 / NCIMB 12804 / NRRL 8165 / MA-4680).